We begin with the raw amino-acid sequence, 413 residues long: MTTQFSVSGIELELFRYPSRQESNLQAWDAADEHLIKHLIDTEQTSISTAVVNDGFGALTAGLLSINPSWPLTLETDAKTSQLGTSQNLTRNQLSQESITWVNSRDELPQVIELVLMKLPKNLNYFSHQLNRLSHVLPAGTQVLIGAKAKSINKSLLETIEKNLGPASASLTWKKTRVITCIADGKARALPKATTWSVPEFKLQISNLSNVFAANKLDIGARIMLDNMPKGDYKSIVDLGCGNGILGLHAKQVFPEAYIHFIDDSEMAVASARENWALNKLDNPALVGEQATFGWDDCLTNMSEGFRPDLVLCNPPFHQGEAITDHIAWQMFLDAFRRLKNGGILHVVGNRHLAYHVKLQRIFKNCTTVASNGKFVILQAQKISKKAQEAEVEQAFDTETPHPQSALYGKPKA.

Residues 389 to 413 form a disordered region; it reads EAEVEQAFDTETPHPQSALYGKPKA.

This sequence belongs to the methyltransferase superfamily. RlmG family.

It is found in the cytoplasm. It carries out the reaction guanosine(1835) in 23S rRNA + S-adenosyl-L-methionine = N(2)-methylguanosine(1835) in 23S rRNA + S-adenosyl-L-homocysteine + H(+). Specifically methylates the guanine in position 1835 (m2G1835) of 23S rRNA. In Shewanella pealeana (strain ATCC 700345 / ANG-SQ1), this protein is Ribosomal RNA large subunit methyltransferase G.